The sequence spans 162 residues: Caveolin-2 (162 aa).

The Cytoplasmic portion of the chain corresponds to 1 to 86 (MGLETEKADV…FEISKYIIYK (86 aa)). A Phosphotyrosine; by SRC modification is found at Y19. A phosphoserine mark is found at S20 and S23. The residue at position 27 (Y27) is a Phosphotyrosine; by SRC. The segment at residues 87 to 107 (FLTVFLAIPLAFAAGILFATL) is an intramembrane region (helical). The Cytoplasmic segment spans residues 108 to 162 (SCLHIWITMPFVKTCLMVLPSVQTIWKSVTDVAIAPLCTSVGRSFSSVSLQLSHD).

Belongs to the caveolin family. Monomer or homodimer. Interacts with CAV1; the interaction forms a stable heterooligomeric complex that is required for targeting to lipid rafts and for caveolae formation. Tyrosine phosphorylated forms do not form heterooligomers with the Tyr-19-phosphorylated form existing as a monomer or dimer, and the Tyr-27-form as a monomer only. Interacts (tyrosine phosphorylated form) with the SH2 domain-containing proteins, RASA1, NCK1 and SRC. Interacts (tyrosine phosphorylated form) with INSR, the interaction (Tyr-27-phosphorylated form) is increased on insulin stimulation. Interacts (Tyr-19 phosphorylated form) with MAPK1 (phosphorylated form); the interaction, promoted by insulin, leads to nuclear location and MAPK1 activation. Interacts with STAT3; the interaction is increased on insulin-induced tyrosine phosphorylation leading to STAT activation. In terms of processing, phosphorylated on serine and tyrosine residues. CAV1 promotes phosphorylation on Ser-23 which then targets the complex to the plasma membrane, lipid rafts and caveolae. Phosphorylation on both Tyr-19 and Tyr-27 is required for insulin-induced 'Ser-727' phosphorylation of STAT3 and its activation. Phosphorylation on Tyr-19 is required for insulin-induced phosphorylation of MAPK1 and DNA binding of STAT3. Tyrosine phosphorylation is induced by both EGF and insulin.

It is found in the nucleus. The protein resides in the cytoplasm. It localises to the golgi apparatus membrane. Its subcellular location is the cell membrane. The protein localises to the membrane. It is found in the caveola. Its function is as follows. May act as a scaffolding protein within caveolar membranes. Interacts directly with G-protein alpha subunits and can functionally regulate their activity. Acts as an accessory protein in conjunction with CAV1 in targeting to lipid rafts and driving caveolae formation. Positive regulator of cellular mitogenesis of the MAPK signaling pathway. Required for the insulin-stimulated nuclear translocation and activation of MAPK1 and STAT3, and the subsequent regulation of cell cycle progression. The polypeptide is Caveolin-2 (CAV2) (Dasypus novemcinctus (Nine-banded armadillo)).